Consider the following 188-residue polypeptide: Peptidyl-tRNA hydrolase (188 aa).

Tyr-14 is a binding site for tRNA. His-19 serves as the catalytic Proton acceptor. Residues Tyr-64, Asn-66, and Asn-113 each coordinate tRNA.

It belongs to the PTH family. In terms of assembly, monomer.

The protein resides in the cytoplasm. It carries out the reaction an N-acyl-L-alpha-aminoacyl-tRNA + H2O = an N-acyl-L-amino acid + a tRNA + H(+). Its function is as follows. Hydrolyzes ribosome-free peptidyl-tRNAs (with 1 or more amino acids incorporated), which drop off the ribosome during protein synthesis, or as a result of ribosome stalling. Functionally, catalyzes the release of premature peptidyl moieties from peptidyl-tRNA molecules trapped in stalled 50S ribosomal subunits, and thus maintains levels of free tRNAs and 50S ribosomes. The protein is Peptidyl-tRNA hydrolase of Chloroflexus aurantiacus (strain ATCC 29364 / DSM 637 / Y-400-fl).